The primary structure comprises 85 residues: Neurotoxin 60.35 (85 aa).

Positions 1 to 23 are cleaved as a signal peptide; that stretch reads MKFCVAVSLLIIASMAGVISVSG. One can recognise an LCN-type CS-alpha/beta domain in the interval 24 to 85; sequence YDVYPRDYAG…NFLSVIWKQC (62 aa). Cystine bridges form between Cys-38/Cys-60, Cys-46/Cys-65, and Cys-50/Cys-67.

It belongs to the long (3 C-C) scorpion toxin superfamily. Expressed by the venom gland.

The protein localises to the secreted. This is Neurotoxin 60.35 from Lychas mucronatus (Chinese swimming scorpion).